Consider the following 141-residue polypeptide: Large ribosomal subunit protein uL11 (141 aa).

Belongs to the universal ribosomal protein uL11 family. Part of the ribosomal stalk of the 50S ribosomal subunit. Interacts with L10 and the large rRNA to form the base of the stalk. L10 forms an elongated spine to which L12 dimers bind in a sequential fashion forming a multimeric L10(L12)X complex. Post-translationally, one or more lysine residues are methylated.

In terms of biological role, forms part of the ribosomal stalk which helps the ribosome interact with GTP-bound translation factors. The protein is Large ribosomal subunit protein uL11 of Lactobacillus johnsonii (strain CNCM I-12250 / La1 / NCC 533).